Here is a 332-residue protein sequence, read N- to C-terminus: Torsin-1A (332 aa).

An N-terminal signal peptide occupies residues 1 to 20 (MKLGRAVLGLLLLAPSVVQA). Positions 91 to 251 (KPKKPLTLSL…VSVFNNKNSG (161 aa)) are interaction with SNAPIN. 102 to 109 (GWTGTGKN) contributes to the ATP binding site. Residues Asn-143 and Asn-158 are each glycosylated (N-linked (GlcNAc...) (high mannose) asparagine). Residues 251 to 332 (GFWHSSLIDR…FTKLDYYYDD (82 aa)) form an interaction with KLC1 region. The interaction with SYNE3 stretch occupies residues 312–332 (RVFSDKGCKTVFTKLDYYYDD).

The protein belongs to the ClpA/ClpB family. Torsin subfamily. In terms of assembly, homohexamer. Interacts with TOR1B; the interaction may be specific of neural tissues. Interacts (ATP-bound) with TOR1AIP1 and TOR1AIP2; the interactions induce ATPase activity. Interacts with KLHL14; preferentially when ATP-free. Interacts with KLC1 (via TPR repeats); the interaction associates TOR1A with the kinesin oligomeric complex. Interacts with COPS4; the interaction associates TOR1A with the CSN complex. Interacts with SNAPIN; the interaction is direct and associates SNAPIN with the CSN complex. Interacts with STON2. Interacts (ATP-bound) with SYNE3 (via KASH domain); the interaction is required for SYNE3 nuclear envelope localization. Interacts with VIM; the interaction associates TOR1A with the cytoskeleton. Interacts with PLEC. Interacts (ATP-bound) with SLC6A3; regulates SLC6A3 transport to the plasma membrane. Post-translationally, N-glycosylated. In terms of tissue distribution, widely expressed. Highest levels in kidney and liver. In the brain, high levels found in the dopaminergic neurons of the substantia nigra pars compacta, as well as in the neocortex, hippocampus and cerebellum. Also highly expressed in the spinal cord.

The protein resides in the endoplasmic reticulum lumen. Its subcellular location is the nucleus membrane. It localises to the cell projection. It is found in the growth cone. The protein localises to the cytoplasmic vesicle membrane. The protein resides in the cytoplasmic vesicle. Its subcellular location is the secretory vesicle. It localises to the synaptic vesicle. It is found in the cytoplasm. The protein localises to the cytoskeleton. The enzyme catalyses ATP + H2O = ADP + phosphate + H(+). Functionally, protein with chaperone functions important for the control of protein folding, processing, stability and localization as well as for the reduction of misfolded protein aggregates. Involved in the regulation of synaptic vesicle recycling, controls STON2 protein stability in collaboration with the COP9 signalosome complex (CSN). In the nucleus, may link the cytoskeleton with the nuclear envelope, this mechanism seems to be crucial for the control of nuclear polarity, cell movement and, specifically in neurons, nuclear envelope integrity. Participates in the cellular trafficking and may regulate the subcellular location of multipass membrane proteins such as the dopamine transporter SLC6A3, leading to the modulation of dopamine neurotransmission. In the endoplasmic reticulum, plays a role in the quality control of protein folding by increasing clearance of misfolded proteins such as SGCE variants or holding them in an intermediate state for proper refolding. May have a redundant function with TOR1B in non-neural tissues. In Homo sapiens (Human), this protein is Torsin-1A (TOR1A).